Reading from the N-terminus, the 194-residue chain is Holliday junction branch migration complex subunit RuvA (194 aa).

Residues 1 to 64 (MISRLTGKLV…EDAHLLFGFA (64 aa)) form a domain I region. The segment at 65-143 (TAEERKTFRQ…AHTVTDGLFA (79 aa)) is domain II. Residues 144–147 (AAPA) are flexible linker. The domain III stretch occupies residues 147 to 194 (AADETEDIVSTLLALGYSEREAKAAVKGVPEGTDVGEGVRLALKNLLK).

Belongs to the RuvA family. Homotetramer. Forms an RuvA(8)-RuvB(12)-Holliday junction (HJ) complex. HJ DNA is sandwiched between 2 RuvA tetramers; dsDNA enters through RuvA and exits via RuvB. An RuvB hexamer assembles on each DNA strand where it exits the tetramer. Each RuvB hexamer is contacted by two RuvA subunits (via domain III) on 2 adjacent RuvB subunits; this complex drives branch migration. In the full resolvosome a probable DNA-RuvA(4)-RuvB(12)-RuvC(2) complex forms which resolves the HJ.

The protein resides in the cytoplasm. Functionally, the RuvA-RuvB-RuvC complex processes Holliday junction (HJ) DNA during genetic recombination and DNA repair, while the RuvA-RuvB complex plays an important role in the rescue of blocked DNA replication forks via replication fork reversal (RFR). RuvA specifically binds to HJ cruciform DNA, conferring on it an open structure. The RuvB hexamer acts as an ATP-dependent pump, pulling dsDNA into and through the RuvAB complex. HJ branch migration allows RuvC to scan DNA until it finds its consensus sequence, where it cleaves and resolves the cruciform DNA. This chain is Holliday junction branch migration complex subunit RuvA, found in Neisseria meningitidis serogroup C (strain 053442).